A 96-amino-acid polypeptide reads, in one-letter code: Large ribosomal subunit protein bL25 (96 aa).

This sequence belongs to the bacterial ribosomal protein bL25 family. In terms of assembly, part of the 50S ribosomal subunit; part of the 5S rRNA/L5/L18/L25 subcomplex. Contacts the 5S rRNA. Binds to the 5S rRNA independently of L5 and L18.

Its function is as follows. This is one of the proteins that binds to the 5S RNA in the ribosome where it forms part of the central protuberance. In Buchnera aphidicola subsp. Schizaphis graminum (strain Sg), this protein is Large ribosomal subunit protein bL25.